A 491-amino-acid chain; its full sequence is CRM-domain containing factor CFM9, mitochondrial (491 aa).

Residues 1–25 constitute a mitochondrion transit peptide; that stretch reads MNQVFKGWSRGMSTSRGRSMRSKVE. The tract at residues 1 to 34 is disordered; it reads MNQVFKGWSRGMSTSRGRSMRSKVESRMRKESGK. The segment covering 22-34 has biased composition (basic and acidic residues); sequence SKVESRMRKESGK. The CRM domain occupies 90-187; that stretch reads ELFTSEQVQA…RNYRQPKNLI (98 aa). The segment covering 255–265 has biased composition (basic and acidic residues); the sequence is PYVFHGDKQSE. Disordered regions lie at residues 255–287 and 328–491; these read PYVFHGDKQSERGTSVDNREESEPGDEDSDQEE and RSRT…WDSD. Residues 277-287 are compositionally biased toward acidic residues; the sequence is EPGDEDSDQEE. The span at 345-359 shows a compositional bias: basic and acidic residues; sequence RRNDRDTHSQRRPND. A compositionally biased stretch (acidic residues) spans 360–375; the sequence is SDDDDDDGELDSEDDE. Over residues 392 to 416 the composition is skewed to basic and acidic residues; that stretch reads RPREDFKRRSPDPRPRPRAQVRSDD. Positions 453 to 478 are enriched in polar residues; the sequence is TVSASSSKQSRFRNNSSRDGINNSKS.

In terms of tissue distribution, highly expressed in roots and meristemic regions of young seedlings. Expressed at low levels in stems, trichomes and stigma.

The protein resides in the mitochondrion. Its function is as follows. Involved in the splicing of group II introns in mitochondria. Required for the splicing of mitochondrial introns found in nad1, nad2, nad4, nad5, nad7, rps3 and cox2 genes. Splicing of mitochondrial introns is crucial for mitochondrial biogenesis and function, plant growth and development, and plant response to abiotic stresses. This is CRM-domain containing factor CFM9, mitochondrial from Arabidopsis thaliana (Mouse-ear cress).